The following is a 258-amino-acid chain: UPF0246 protein YaaA (258 aa).

It belongs to the UPF0246 family.

In Escherichia coli O157:H7 (strain EC4115 / EHEC), this protein is UPF0246 protein YaaA.